Consider the following 262-residue polypeptide: Small ribosomal subunit protein uS3 (262 aa).

The KH type-2 domain occupies 38 to 106; the sequence is LRKIIAKELE…KVKLNIQEIH (69 aa). Residues 211–262 are disordered; it reads KGQTQLPQPAVAAARPGLTVEEEERPQRKGGRGGRGANAGAARGGRGGRSRS. Gly residues predominate over residues 243–255; that stretch reads GGRGANAGAARGG.

This sequence belongs to the universal ribosomal protein uS3 family. Part of the 30S ribosomal subunit. Forms a tight complex with proteins S10 and S14.

Functionally, binds the lower part of the 30S subunit head. Binds mRNA in the 70S ribosome, positioning it for translation. This is Small ribosomal subunit protein uS3 from Roseiflexus sp. (strain RS-1).